The following is a 1379-amino-acid chain: Increased rDNA silencing protein 4 homolog (1379 aa).

8 disordered regions span residues 1 to 25 (MDAIHPVSLRNSKRHPLLHSERNLS), 138 to 159 (TSTRKRSLTVPTPRTSFPHHPR), 240 to 314 (EFDF…PLPS), 337 to 370 (SQPFKSAEPLSSAIPLPNPMSEKMRNGASKQAIM), 534 to 573 (ASKRAALSQQTESASKSSSNISEMCDSHPPSNFSISASQQ), 768 to 816 (TDLH…NDIG), 1047 to 1110 (DAPS…KDSQ), and 1168 to 1208 (AVHE…DGKY). A compositionally biased stretch (basic and acidic residues) spans 250-259 (PSDKNLEKLK). Residues 262–287 (ASKQASESQSLKNMESLSLARSSPIL) show a composition bias toward polar residues. A compositionally biased stretch (low complexity) spans 541–555 (SQQTESASKSSSNIS). The span at 562–573 (PPSNFSISASQQ) shows a compositional bias: polar residues. The span at 770 to 780 (LHRKPRRKHKS) shows a compositional bias: basic residues. The segment covering 793–802 (DESPQSDEVE) has biased composition (acidic residues). Positions 1240–1329 (AANKGYLLSK…DSVWLSSKRM (90 aa)) constitute an EH domain. The 36-residue stretch at 1273–1308 (APTSVLAKIYDLVDRHHTGVLGRDEFIVGMFLIDQY) folds into the EF-hand domain.

The protein belongs to the IRS4 family.

Positive regulator of phosphatidylinositol 4,5-bisphosphate turnover and negatively regulates signaling through the cell integrity pathway. Involved in rDNA silencing. This is Increased rDNA silencing protein 4 homolog from Schizosaccharomyces pombe (strain 972 / ATCC 24843) (Fission yeast).